The primary structure comprises 237 residues: Large ribosomal subunit protein bL25 (237 aa).

The N-terminal domain stretch occupies residues 1–104 (MELTAKPRTP…SVPVHTTGRS (104 aa)). The tract at residues 105–189 (QGEVQGGLVD…ELEAEVQAAQ (85 aa)) is middle domain. The interval 190-237 (VAGLVAAGELSEEAAEAVLEGDASLEEVKAEASEDNAGTDSEDNSDAQ) is C-terminal domain. Positions 205 to 237 (EAVLEGDASLEEVKAEASEDNAGTDSEDNSDAQ) are disordered.

The protein belongs to the bacterial ribosomal protein bL25 family. CTC subfamily. As to quaternary structure, part of the 50S ribosomal subunit. Contacts proteins L11 and L16, the A site tRNA, and the 5S and 23S rRNAs.

Its function is as follows. This is one of 3 proteins that mediate the attachment of the 5S rRNA onto the large ribosomal subunit. This protein has three domains. The N-terminal one is bound on the solvent face, the middle domain fills the space between the 5S rRNA and the L11 arm contacting the 23S rRNA while the C-terminal domain is on the edge of the intersubunit interface and contacts the A site. The protein conformation changes upon binding of a tRNA mimic to the A site, although the mimic does not interact directly with CTC itself, consistent with CTCs presumed role in moderating A site binding. This is Large ribosomal subunit protein bL25 (rplY) from Deinococcus radiodurans (strain ATCC 13939 / DSM 20539 / JCM 16871 / CCUG 27074 / LMG 4051 / NBRC 15346 / NCIMB 9279 / VKM B-1422 / R1).